We begin with the raw amino-acid sequence, 1103 residues long: Ubiquitin carboxyl-terminal hydrolase 7 (1103 aa).

The segment covering 1–11 has biased composition (low complexity); the sequence is MNHQQQQQQQQ. A disordered region spans residues 1–40; sequence MNHQQQQQQQQKAGEQQLSEPEDMEMEAGDTDDPPRITQN. The interval 1-209 is interaction with TSPYL5; it reads MNHQQQQQQQ…APHGVAWDSK (209 aa). Serine 19 carries the post-translational modification Phosphoserine. Positions 20-32 are enriched in acidic residues; the sequence is EPEDMEMEAGDTD. A phosphoserine mark is found at serine 50 and serine 54. Residues 54–209 form an interaction with p53/TP53 and MDM2 region; that stretch reads SNAEEDMEDD…APHGVAWDSK (156 aa). The region spanning 69 to 196 is the MATH domain; it reads EATFQFTVER…DDKVTFEVFV (128 aa). Positions 71-206 are necessary for nuclear localization; it reads TFQFTVERFS…QADAPHGVAW (136 aa). Residues 215-522 form the USP domain; sequence VGLKNQGATC…NAYMLVYIRE (308 aa). Residue cysteine 224 is the Nucleophile of the active site. The active-site Proton acceptor is the histidine 465. Lysine 870 is subject to N6-acetyllysine; alternate. A Glycyl lysine isopeptide (Lys-Gly) (interchain with G-Cter in SUMO2); alternate cross-link involves residue lysine 870. Lysine 870 participates in a covalent cross-link: Glycyl lysine isopeptide (Lys-Gly) (interchain with G-Cter in ubiquitin); alternate. Lysine 883 is covalently cross-linked (Glycyl lysine isopeptide (Lys-Gly) (interchain with G-Cter in SUMO2)). Serine 964 is subject to Phosphoserine. N6-acetyllysine is present on residues lysine 1085 and lysine 1097.

The protein belongs to the peptidase C19 family. As to quaternary structure, monomer. Homodimer. Part of a complex with DAXX, MDM2, RASSF1 and USP7. Part of a complex with DAXX, MDM2 and USP7. Interacts with MDM2; the interaction is independent of p53/TP53. Interacts with DAXX; the interaction is direct and independent of MDM2 and p53/TP53. Component of a complex composed of KMT2E, OGT and USP7; the complex stabilizes KMT2E, preventing KMT2E ubiquitination and proteasomal-mediated degradation. Interacts (via MATH domain) with KMT2E. Interacts with OGT. Interacts with FOXO4; the interaction is enhanced in presence of hydrogen peroxide and occurs independently of p53/TP53. Interacts with p53/TP53; the interaction is enhanced in response to DNA damage; the interaction is impaired by TSPYL5. Interacts with PTEN; the interaction is direct. Interacts with ATXN1 and the strength of interaction is influenced by the length of the poly-Gln region in ATXN1. A weaker interaction seen with mutants having longer poly-Gln regions. Interacts with KIAA1530/UVSSA. Interacts with MEX3C and antagonizes its ability to degrade mRNA. Interacts with DNMT1 and UHRF1. Interacts with FOXP3. Interacts (via MATH domain) with RNF220. Associated component of the Polycomb group (PcG) multiprotein PRC1-like complex. Interacts with EPOP. Interacts with OTUD4 and USP9X; the interaction is direct. Interacts with CRY2. Interacts with REST. Interacts with ERCC6. Part of a complex consisting of USP7, MAGEL2 and TRIM27; directly interacts with MAGEL2; directly interacts with TRIM27. In terms of processing, polyneddylated. Not sumoylated. Post-translationally, ubiquitinated at Lys-870. Polyubiquitinated. In terms of tissue distribution, strongly expressed in the testis, spleen and brain. Weakly expressed in the stomach, small intestine, skeletal muscle and uterus.

It localises to the nucleus. The protein localises to the cytoplasm. It is found in the PML body. The protein resides in the chromosome. The enzyme catalyses Thiol-dependent hydrolysis of ester, thioester, amide, peptide and isopeptide bonds formed by the C-terminal Gly of ubiquitin (a 76-residue protein attached to proteins as an intracellular targeting signal).. Functionally, hydrolase that deubiquitinates target proteins such as ARMC5, FOXO4, DEPTOR, KAT5, p53/TP53, MDM2, ERCC6, DNMT1, UHRF1, PTEN, KMT2E/MLL5 and DAXX. Together with DAXX, prevents MDM2 self-ubiquitination and enhances the E3 ligase activity of MDM2 towards p53/TP53, thereby promoting p53/TP53 ubiquitination and proteasomal degradation. Deubiquitinates p53/TP53, preventing degradation of p53/TP53, and enhances p53/TP53-dependent transcription regulation, cell growth repression and apoptosis. Deubiquitinates p53/TP53 and MDM2 and strongly stabilizes p53/TP53 even in the presence of excess MDM2, and also induces p53/TP53-dependent cell growth repression and apoptosis. Deubiquitination of FOXO4 in presence of hydrogen peroxide is not dependent on p53/TP53 and inhibits FOXO4-induced transcriptional activity. In association with DAXX, is involved in the deubiquitination and translocation of PTEN from the nucleus to the cytoplasm, both processes that are counteracted by PML. Deubiquitinates KMT2E preventing KMT2E proteasomal-mediated degradation. Involved in cell proliferation during early embryonic development. Involved in transcription-coupled nucleotide excision repair (TC-NER) in response to UV damage: recruited to DNA damage sites following interaction with KIAA1530/UVSSA and promotes deubiquitination of ERCC6, preventing UV-induced degradation of ERCC6. Involved in maintenance of DNA methylation via its interaction with UHRF1 and DNMT1: acts by mediating deubiquitination of UHRF1 and DNMT1, preventing their degradation and promoting DNA methylation by DNMT1. Deubiquitinates alkylation repair enzyme ALKBH3. OTUD4 recruits USP7 and USP9X to stabilize ALKBH3, thereby promoting the repair of alkylated DNA lesions. Acts as a chromatin regulator via its association with the Polycomb group (PcG) multiprotein PRC1-like complex; may act by deubiquitinating components of the PRC1-like complex. Able to mediate deubiquitination of histone H2B; it is however unsure whether this activity takes place in vivo. Exhibits a preference towards 'Lys-48'-linked ubiquitin chains. Increases regulatory T-cells (Treg) suppressive capacity by deubiquitinating and stabilizing transcription factor FOXP3 which is crucial for Treg cell function. Plays a role in the maintenance of the circadian clock periodicity via deubiquitination and stabilization of the CRY1 and CRY2 proteins. Deubiquitinates REST, thereby stabilizing REST and promoting the maintenance of neural progenitor cells. Deubiquitinates SIRT7, inhibiting SIRT7 histone deacetylase activity and regulating gluconeogenesis. Involved in the regulation of WASH-dependent actin polymerization at the surface of endosomes and the regulation of endosomal protein recycling. It maintains optimal WASH complex activity and precise F-actin levels via deubiquitination of TRIM27 and WASHC1. Mediates the deubiquitination of phosphorylated DEPTOR, promoting its stability and leading to decreased mTORC1 signaling. This chain is Ubiquitin carboxyl-terminal hydrolase 7 (Usp7), found in Rattus norvegicus (Rat).